The chain runs to 577 residues: Protein CBFA2T1 (577 aa).

The span at 1-10 (MPDRTEKHST) shows a compositional bias: basic and acidic residues. The disordered stretch occupies residues 1-87 (MPDRTEKHST…SSSSLANQQL (87 aa)). Residue serine 14 is modified to Phosphoserine. Polar residues predominate over residues 42-59 (SSFTPTTLTNGTSHSPTA). A compositionally biased stretch (low complexity) spans 68–87 (NGFSNGPSSSSSSSLANQQL). Residues 93–188 (ARQLSKLKRF…NPAQYLAQHE (96 aa)) form the TAFH domain. Residues 203-271 (SELLLDVNEN…LPHPTPPPPQ (69 aa)) are disordered. Positions 211–237 (ENGKRRTPDRTKENGFDREPLHSEHPS) are enriched in basic and acidic residues. Residues 244 to 258 (SPGQRYSPNNGLSYQ) show a composition bias toward polar residues. The segment covering 262 to 271 (LPHPTPPPPQ) has biased composition (pro residues). Residues 310-356 (QEEMIDHRLTDREWAEEWKHLDHLLNCIMDMVEKTRRSLTVLRRCQE) form an important for oligomerization region. The segment at 310 to 356 (QEEMIDHRLTDREWAEEWKHLDHLLNCIMDMVEKTRRSLTVLRRCQE) is nervy homology region 2 (NHR2). The segment at 374-396 (DLKKGGSSSSSHSRQQSPVNPDP) is disordered. Positions 380 to 390 (SSSSSHSRQQS) are enriched in low complexity. Serine 390 bears the Phosphoserine mark. Positions 416 to 465 (EEIWKKAEEAVNEVKRQAMTELQKAVSEAERKAHDMITTERAKMERTVAE) are nervy homology region 3 (NHR3). Zn(2+) is bound by residues cysteine 488, cysteine 491, cysteine 499, cysteine 502, cysteine 508, cysteine 512, histidine 520, and cysteine 524. Residues 488–524 (CWNCGRKASETCSGCNTARYCGSFCQHKDWEKHHHIC) form an MYND-type zinc finger. The interval 529–577 (QAPQQGDTPAVSSSVTPSSGAGSPMDTPPAATPRSTTPGTPSTIETTPR) is disordered. Low complexity-rich tracts occupy residues 536–553 (TPAV…GSPM) and 560–577 (TPRS…TTPR).

This sequence belongs to the CBFA2T family. In terms of assembly, homotetramer. Heterotetramer with CBFA2T2 and CBFA2T3. Interacts with TCF12, SIN3A, HDAC1, HDAC2, HDAC3, NCOR1 and NCOR2. Interacts with ATN1 (via its N-terminus); the interaction enhances the transcriptional repression.

The protein localises to the nucleus. Transcriptional corepressor which facilitates transcriptional repression via its association with DNA-binding transcription factors and recruitment of other corepressors and histone-modifying enzymes. Can repress the expression of MMP7 in a ZBTB33-dependent manner. Can repress transactivation mediated by TCF12. Acts as a negative regulator of adipogenesis. The chain is Protein CBFA2T1 (Runx1t1) from Mus musculus (Mouse).